A 157-amino-acid chain; its full sequence is Dihydrofolate reductase type 5 (157 aa).

Residues 2–156 (KVSLMAAKAK…INYCYQIWQK (155 aa)) form the DHFR domain.

Belongs to the dihydrofolate reductase family. Homodimer.

It catalyses the reaction (6S)-5,6,7,8-tetrahydrofolate + NADP(+) = 7,8-dihydrofolate + NADPH + H(+). Its pathway is cofactor biosynthesis; tetrahydrofolate biosynthesis; 5,6,7,8-tetrahydrofolate from 7,8-dihydrofolate: step 1/1. Its function is as follows. Key enzyme in folate metabolism. Catalyzes an essential reaction for de novo glycine and purine synthesis, and for DNA precursor synthesis. The chain is Dihydrofolate reductase type 5 (dhfrV) from Escherichia coli.